The chain runs to 67 residues: Small ribosomal subunit protein eS17 (67 aa).

This sequence belongs to the eukaryotic ribosomal protein eS17 family.

In Pyrococcus abyssi (strain GE5 / Orsay), this protein is Small ribosomal subunit protein eS17.